The chain runs to 551 residues: Prunin 1 Pru du 6.0101 (551 aa).

An N-terminal signal peptide occupies residues 1–20 (MAKAFVFSLCLLLVFNGCLA). 2 cysteine pairs are disulfide-bonded: C32/C65 and C108/C374. The 276-residue stretch at 37–312 (LQAREPDNRI…ALNVNEETAR (276 aa)) folds into the Cupin type-1 1 domain. Disordered stretches follow at residues 111 to 194 (TFEE…QKTR), 238 to 293 (NPRK…NVFS), and 311 to 361 (ARNL…QQQG). Low complexity-rich tracts occupy residues 114-124 (ESQQSSQQGRQ), 132-148 (QQQQ…QQEQ), and 168-185 (QEQQ…QQFR). 4 igE-binding regions span residues 118 to 132 (SSQQ…QERQ), 145 to 159 (QQEQ…QQGR), 161 to 175 (QQEE…QGQQ), and 225 to 239 (LFHV…DQNP). Residues 254 to 275 (QQGQSQPRQQGEQGRPGQHQQP) are compositionally biased toward low complexity. The tract at residues 281–295 (QQEQQGSGNNVFSGF) is igE-binding. Polar residues-rich tracts occupy residues 282-293 (QEQQGSGNNVFS) and 311-323 (ARNL…NRNQ). Residues 339 to 350 (GRQEREHEERQQ) are compositionally biased toward basic and acidic residues. The span at 351–361 (EQLQQERQQQG) shows a compositional bias: low complexity. The NGXEET; peptidase recognition motif motif lies at 367–372 (NGLEET). One can recognise a Cupin type-1 2 domain in the interval 380–529 (ENIGNPERAD…AYQISREQAR (150 aa)). The tract at residues 510-524 (RALPDEVLANAYQIS) is igE-binding.

Belongs to the 11S seed storage protein (globulins) family. Hexamer of two trimers; each subunit is composed of an acidic and a basic chain derived from a single precursor and linked by a disulfide bond. In terms of processing, proteolytically processed from a single precursor to produce an acidic and a basic chain that are linked by a disulfide bond. As to expression, expressed in seed (at protein level).

In terms of biological role, seed storage protein. This Prunus dulcis (Almond) protein is Prunin 1 Pru du 6.0101.